Reading from the N-terminus, the 158-residue chain is Nuclear cap-binding protein subunit 2 (158 aa).

MRNA-binding positions include Y17, Y40, 109-113 (RADWD), 120-124 (RQYGR), and 130-131 (QV). An RRM domain is found at 37–115 (CTLYVGNLSY…RVIRADWDAG (79 aa)). The interval 123-158 (GRGKHGGQVRDEYRKDYDPERGGYNRAIAQKGGDRQ) is disordered. The segment covering 130-145 (QVRDEYRKDYDPERGG) has biased composition (basic and acidic residues).

Belongs to the RRM NCBP2 family. Component of the nuclear cap-binding complex (CBC), a heterodimer composed of ncbp-1 and ncbp-2 that interacts with m7GpppG-capped RNA.

Its subcellular location is the nucleus. Component of the cap-binding complex (CBC), which binds co-transcriptionally to the 5' cap of pre-mRNAs and is involved in various processes such as pre-mRNA splicing and RNA-mediated gene silencing (RNAi). The CBC complex is involved in miRNA-mediated RNA interference and is required for primary microRNAs (miRNAs) processing. In the CBC complex, ncbp-2 recognizes and binds capped RNAs (m7GpppG-capped RNA) but requires ncbp-1 to stabilize the movement of its N-terminal loop and lock the CBC into a high affinity cap-binding state with the cap structure. This chain is Nuclear cap-binding protein subunit 2 (ncbp-2), found in Caenorhabditis elegans.